A 184-amino-acid chain; its full sequence is GTP cyclohydrolase 1 (184 aa).

The Zn(2+) site is built by Cys-75, His-78, and Cys-146.

This sequence belongs to the GTP cyclohydrolase I family. Toroid-shaped homodecamer, composed of two pentamers of five dimers.

The enzyme catalyses GTP + H2O = 7,8-dihydroneopterin 3'-triphosphate + formate + H(+). It participates in cofactor biosynthesis; 7,8-dihydroneopterin triphosphate biosynthesis; 7,8-dihydroneopterin triphosphate from GTP: step 1/1. The polypeptide is GTP cyclohydrolase 1 (Pseudoalteromonas translucida (strain TAC 125)).